Reading from the N-terminus, the 295-residue chain is GTPase Era (295 aa).

An Era-type G domain is found at 3–171 (KSGFITVIGR…LELMKKYLPE (169 aa)). Positions 11 to 18 (GRPNVGKS) are G1. 11–18 (GRPNVGKS) is a binding site for GTP. The G2 stretch occupies residues 37-41 (QTTRN). Positions 58 to 61 (DTPG) are G3. GTP is bound by residues 58 to 62 (DTPGM) and 120 to 123 (NKID). Residues 120-123 (NKID) are G4. The tract at residues 150–152 (ISA) is G5. Residues 202–279 (LSEEVPHGIA…SLKVWVKVKK (78 aa)) form the KH type-2 domain.

This sequence belongs to the TRAFAC class TrmE-Era-EngA-EngB-Septin-like GTPase superfamily. Era GTPase family. Monomer.

It localises to the cytoplasm. It is found in the cell membrane. In terms of biological role, an essential GTPase that binds both GDP and GTP, with rapid nucleotide exchange. Plays a role in 16S rRNA processing and 30S ribosomal subunit biogenesis and possibly also in cell cycle regulation and energy metabolism. The chain is GTPase Era from Clostridium tetani (strain Massachusetts / E88).